The sequence spans 157 residues: 2-C-methyl-D-erythritol 2,4-cyclodiphosphate synthase (157 aa).

The a divalent metal cation site is built by Asp8 and His10. Residues 8-10 and 34-35 contribute to the 4-CDP-2-C-methyl-D-erythritol 2-phosphate site; these read DVH and HS. His42 lines the a divalent metal cation pocket. Residues 56–58, 61–65, 132–135, Phe139, and Arg142 each bind 4-CDP-2-C-methyl-D-erythritol 2-phosphate; these read DIG, FPDTD, and TTTE.

It belongs to the IspF family. In terms of assembly, homotrimer. A divalent metal cation serves as cofactor.

The enzyme catalyses 4-CDP-2-C-methyl-D-erythritol 2-phosphate = 2-C-methyl-D-erythritol 2,4-cyclic diphosphate + CMP. It functions in the pathway isoprenoid biosynthesis; isopentenyl diphosphate biosynthesis via DXP pathway; isopentenyl diphosphate from 1-deoxy-D-xylulose 5-phosphate: step 4/6. Involved in the biosynthesis of isopentenyl diphosphate (IPP) and dimethylallyl diphosphate (DMAPP), two major building blocks of isoprenoid compounds. Catalyzes the conversion of 4-diphosphocytidyl-2-C-methyl-D-erythritol 2-phosphate (CDP-ME2P) to 2-C-methyl-D-erythritol 2,4-cyclodiphosphate (ME-CPP) with a corresponding release of cytidine 5-monophosphate (CMP). The sequence is that of 2-C-methyl-D-erythritol 2,4-cyclodiphosphate synthase from Pseudomonas putida (strain W619).